Reading from the N-terminus, the 212-residue chain is Fibrillarin-like rRNA/tRNA 2'-O-methyltransferase (212 aa).

S-adenosyl-L-methionine contacts are provided by residues 76–77 (TT), 94–95 (EL), 119–120 (DA), and 139–142 (DIAQ).

Belongs to the methyltransferase superfamily. Fibrillarin family. As to quaternary structure, interacts with nop5. Component of box C/D small ribonucleoprotein (sRNP) particles that contain rpl7ae, FlpA and nop5, plus a guide RNA.

Functionally, involved in pre-rRNA and tRNA processing. Utilizes the methyl donor S-adenosyl-L-methionine to catalyze the site-specific 2'-hydroxyl methylation of ribose moieties in rRNA and tRNA. Site specificity is provided by a guide RNA that base pairs with the substrate. Methylation occurs at a characteristic distance from the sequence involved in base pairing with the guide RNA. This is Fibrillarin-like rRNA/tRNA 2'-O-methyltransferase from Picrophilus torridus (strain ATCC 700027 / DSM 9790 / JCM 10055 / NBRC 100828 / KAW 2/3).